Reading from the N-terminus, the 217-residue chain is Twisted gastrulation protein homolog 1-A (217 aa).

An N-terminal signal peptide occupies residues 1–26 (MRPALFLCPVLISVLFLLSSLSLISG). N-linked (GlcNAc...) asparagine glycosylation is found at Asn53 and Asn147.

Belongs to the twisted gastrulation protein family.

It localises to the secreted. Involved in dorsal-ventral patterning. Appears to function predominantly as a ventralizing factor, through its actions as a BMP signaling agonist, acting through both chd-dependent and chd-independent mechanisms. May also antagonize BMP signaling, probably via formation of ternary complexes with chd and BMPs, resulting in dorsalization. The sequence is that of Twisted gastrulation protein homolog 1-A (twsg1a) from Danio rerio (Zebrafish).